A 353-amino-acid chain; its full sequence is Melanin-concentrating hormone receptor 1 (353 aa).

Residues 1 to 31 (MDLEASLLPTGPNTSNTSDGPDNLTSAGSPP) form a disordered region. Over 1–45 (MDLEASLLPTGPNTSNTSDGPDNLTSAGSPPRSGSVSYINIIMPS) the chain is Extracellular. Over residues 11-31 (GPNTSNTSDGPDNLTSAGSPP) the composition is skewed to polar residues. Asparagine 13, asparagine 16, and asparagine 23 each carry an N-linked (GlcNAc...) asparagine glycan. Residues 46–66 (VFGTICLLGIIGNSMVIFAVV) traverse the membrane as a helical segment. Residues 67–79 (KKSKLHWCNNVPD) are Cytoplasmic-facing. Residues 80 to 100 (IFIINLSVVDLLFLLGMPFMI) traverse the membrane as a helical segment. The Extracellular portion of the chain corresponds to 101–118 (HQLMGNGVWHFGETMCTL). An intrachain disulfide couples cysteine 116 to cysteine 194. A helical transmembrane segment spans residues 119-139 (ITAMDANSQFTSTYILTAMAI). The Cytoplasmic segment spans residues 140-161 (DRYLATVHPISSTKFRKPSVAT). The chain crosses the membrane as a helical span at residues 162–182 (LVICLLWALSFISITPVWLYA). Residues 183–204 (RLIPFPGGAVGCGIRLPNPDTD) lie on the Extracellular side of the membrane. A helical transmembrane segment spans residues 205–225 (LYWFTLYQFFLAFALPFVVIT). Residues 226–257 (AAYVRILQRMTSSVAPASQRSIRLRTKRVTRT) are Cytoplasmic-facing. A helical membrane pass occupies residues 258-278 (AIAICLVFFVCWAPYYVLQLT). The Extracellular portion of the chain corresponds to 279 to 294 (QLSISRPTLTFVYLYN). Residues 295-315 (AAISLGYANSCLNPFVYIVLC) traverse the membrane as a helical segment. At 316-353 (ETFRKRLVLSVKPAAQGQLRAVSNAQTADEERTESKGT) the chain is on the cytoplasmic side.

It belongs to the G-protein coupled receptor 1 family. As to quaternary structure, interacts with NCDN.

Its subcellular location is the cell membrane. Receptor for melanin-concentrating hormone, coupled to both G proteins that inhibit adenylyl cyclase and G proteins that activate phosphoinositide hydrolysis. This chain is Melanin-concentrating hormone receptor 1, found in Macaca mulatta (Rhesus macaque).